Reading from the N-terminus, the 262-residue chain is Malonyl-[acyl-carrier protein] O-methyltransferase (262 aa).

This sequence belongs to the methyltransferase superfamily.

The catalysed reaction is malonyl-[ACP] + S-adenosyl-L-methionine = malonyl-[ACP] methyl ester + S-adenosyl-L-homocysteine. Its pathway is cofactor biosynthesis; biotin biosynthesis. In terms of biological role, converts the free carboxyl group of a malonyl-thioester to its methyl ester by transfer of a methyl group from S-adenosyl-L-methionine (SAM). It allows to synthesize pimeloyl-ACP via the fatty acid synthetic pathway. The chain is Malonyl-[acyl-carrier protein] O-methyltransferase from Dechloromonas aromatica (strain RCB).